Reading from the N-terminus, the 974-residue chain is UvrABC system protein A (974 aa).

Gly-34–Ser-41 serves as a coordination point for ATP. ABC transporter domains follow at residues Trp-331–Leu-610 and Ile-630–Lys-959. ATP is bound at residue Gly-663–Ser-670. The C4-type zinc finger occupies Cys-762–Cys-788.

This sequence belongs to the ABC transporter superfamily. UvrA family. Forms a heterotetramer with UvrB during the search for lesions.

The protein localises to the cytoplasm. In terms of biological role, the UvrABC repair system catalyzes the recognition and processing of DNA lesions. UvrA is an ATPase and a DNA-binding protein. A damage recognition complex composed of 2 UvrA and 2 UvrB subunits scans DNA for abnormalities. When the presence of a lesion has been verified by UvrB, the UvrA molecules dissociate. This Brucella suis biovar 1 (strain 1330) protein is UvrABC system protein A.